Here is a 244-residue protein sequence, read N- to C-terminus: ATP synthase subunit 4, mitochondrial (244 aa).

A mitochondrion-targeting transit peptide spans 1-36; that stretch reads MSSKLFCLRSFPSVQRTAWQRLVLPSTRKFSLTPTT.

Belongs to the eukaryotic ATPase B chain family. As to quaternary structure, F-type ATPases have 2 components, CF(1) - the catalytic core - and CF(0) - the membrane proton channel. In yeast, the dimeric form of ATP synthase consists of 17 polypeptides: alpha, beta, gamma, delta, epsilon, 4 (B), 5 (OSCP), 6 (A), 8, 9 (C), d, E (Tim11), f, g, h, i/j and k.

It is found in the mitochondrion. The protein resides in the mitochondrion inner membrane. Functionally, mitochondrial membrane ATP synthase (F(1)F(0) ATP synthase or Complex V) produces ATP from ADP in the presence of a proton gradient across the membrane which is generated by electron transport complexes of the respiratory chain. F-type ATPases consist of two structural domains, F(1) - containing the extramembraneous catalytic core, and F(0) - containing the membrane proton channel, linked together by a central stalk and a peripheral stalk. During catalysis, ATP synthesis in the catalytic domain of F(1) is coupled via a rotary mechanism of the central stalk subunits to proton translocation. Part of the complex F(0) domain and the peripheric stalk, which acts as a stator to hold the catalytic alpha(3)beta(3) subcomplex and subunit a/ATP6 static relative to the rotary elements. The protein is ATP synthase subunit 4, mitochondrial (atp4) of Schizosaccharomyces pombe (strain 972 / ATCC 24843) (Fission yeast).